The chain runs to 248 residues: Cyclo(L-leucyl-L-leucyl) synthase (248 aa).

Residue Ser-37 is the Nucleophile of the active site. Substrate contacts are provided by residues Asn-40, 180–184 (YVIAE), Tyr-204, and 209–210 (KL).

The protein belongs to the CDPS family. In terms of assembly, monomer.

It carries out the reaction 2 L-leucyl-tRNA(Leu) = cyclo(L-leucyl-L-leucyl) + 2 tRNA(Leu) + 2 H(+). Involved in the biosynthesis of pulcherrimin, a red extracellular pigment. It uses activated amino acids in the form of aminoacyl-tRNAs (aa-tRNAs) as substrates to catalyze the ATP-independent formation of cyclodipeptides which are intermediates in diketopiperazine (DKP) biosynthetic pathways. Catalyzes the formation of cyclo(L-Leu-L-Leu) (cLL) from L-leucyl-tRNA(Leu). Can also incorporate various nonpolar residues, such as L-phenylalanine, L-leucine and methionine, into cyclodipeptides. In Bacillus subtilis (strain 168), this protein is Cyclo(L-leucyl-L-leucyl) synthase (yvmC).